The following is a 72-amino-acid chain: Translation initiation factor IF-1 (72 aa).

Positions 1–72 (MAKDDVIEIE…TKGRITYRFK (72 aa)) constitute an S1-like domain.

The protein belongs to the IF-1 family. As to quaternary structure, component of the 30S ribosomal translation pre-initiation complex which assembles on the 30S ribosome in the order IF-2 and IF-3, IF-1 and N-formylmethionyl-tRNA(fMet); mRNA recruitment can occur at any time during PIC assembly.

The protein resides in the cytoplasm. Functionally, one of the essential components for the initiation of protein synthesis. Stabilizes the binding of IF-2 and IF-3 on the 30S subunit to which N-formylmethionyl-tRNA(fMet) subsequently binds. Helps modulate mRNA selection, yielding the 30S pre-initiation complex (PIC). Upon addition of the 50S ribosomal subunit IF-1, IF-2 and IF-3 are released leaving the mature 70S translation initiation complex. The polypeptide is Translation initiation factor IF-1 (Latilactobacillus sakei subsp. sakei (strain 23K) (Lactobacillus sakei subsp. sakei)).